A 1563-amino-acid chain; its full sequence is Rab-3-interacting molecule unc-10 (1563 aa).

The 127-residue stretch at 7–133 folds into the RabBD domain; that stretch reads MPDLSHLSAE…AKTGKWFQPE (127 aa). Over residues 25–35 the composition is skewed to basic and acidic residues; the sequence is FKRQKDEEAKE. The tract at residues 25–50 is disordered; that stretch reads FKRQKDEEAKETQISQKASEELSELD. The segment at 66–121 adopts an FYVE-type zinc-finger fold; the sequence is TQDDAICQICQKTKFADGIGHKCFYCQLRSCARCGGRAQSKNKAIWACSLCQKRQQ. Positions 72, 75, 88, 91, 96, 99, 113, and 116 each coordinate Zn(2+). 2 disordered regions span residues 128–466 and 582–605; these read KWFQ…DHLN and GGLD…RNDH. Residues 172-182 are compositionally biased toward polar residues; that stretch reads NTPNYQNNQQP. Low complexity-rich tracts occupy residues 190-284 and 300-316; these read NHNQ…RNQT and QTPQ…VGAA. A compositionally biased stretch (basic and acidic residues) spans 326–345; it reads QEQHHQQMNEQRTDNNRMRE. Composition is skewed to polar residues over residues 356–367 and 379–389; these read RQPSLEQTTPMN and QRPTFYTGNSE. Low complexity predominate over residues 395–415; sequence FDGQMQQGSQQNNQNQNQNNR. The region spanning 643-733 is the PDZ domain; sequence HMILHRTENS…DTSVELIVSR (91 aa). Residues 840–962 enclose the C2 1 domain; the sequence is IFGRIEVSFV…PLDGEHSLMC (123 aa). Disordered regions lie at residues 1054–1163, 1177–1311, and 1346–1373; these read ENDI…YLGD, GQMT…GGSA, and VGIP…KEST. The segment covering 1086-1097 has biased composition (polar residues); it reads WTQNHQRQSGYT. Positions 1112–1121 are enriched in basic residues; it reads YNRRQQRRPR. Residues 1129-1154 are compositionally biased toward basic and acidic residues; it reads MEREDMYDPTRKHRDDNEYSMRESVR. Positions 1181–1230 are enriched in low complexity; that stretch reads PKQHNQQHQPHPLSQAHQQQQTAGVQPQHHQGFQQQQHPQQPNQQMQQMQ. The segment covering 1242-1255 has biased composition (polar residues); the sequence is GSETLSVHSTNSMP. Residues 1256–1277 are compositionally biased toward low complexity; sequence TTMTTVNRRNMNANNTSNDNTS. A compositionally biased stretch (polar residues) spans 1278-1288; it reads FAETPTANTNR. Low complexity predominate over residues 1297–1311; it reads NSLASSSSVAGGGSA. One can recognise a C2 2 domain in the interval 1417 to 1536; sequence VLGEIQIALM…LGSQPLIGWY (120 aa).

In terms of tissue distribution, restricted to discrete puncta in synapse-rich regions of the nervous system including the nerve ring, the ventral nerve cord and the dorsal nerve cord. Localized expression was found in the head.

Its subcellular location is the synapse. Functionally, regulates the efficiency of a post-docking step of the release pathway. Acts after vesicle docking likely via regulating priming. May regulate the conformational changes in syntaxin. Binding of vesicles via rab-3[GTP] to Rim may signal the presence of a docked synaptic vesicle. Rim may then signal to unc-13 to change the conformation of syntaxin from the closed to the open state. Syntaxin could then engage synaptobrevin on the docked vesicle to form SNARE complexes and to prime the vesicle for release. Not required for the development or the structural organization of synapses. May play a role in regulating entry into the dauer state. The protein is Rab-3-interacting molecule unc-10 of Caenorhabditis elegans.